Here is a 521-residue protein sequence, read N- to C-terminus: Glutamate--cysteine ligase (521 aa).

This sequence belongs to the glutamate--cysteine ligase type 1 family. Type 1 subfamily.

It catalyses the reaction L-cysteine + L-glutamate + ATP = gamma-L-glutamyl-L-cysteine + ADP + phosphate + H(+). It functions in the pathway sulfur metabolism; glutathione biosynthesis; glutathione from L-cysteine and L-glutamate: step 1/2. In Aliivibrio fischeri (strain MJ11) (Vibrio fischeri), this protein is Glutamate--cysteine ligase.